Here is a 422-residue protein sequence, read N- to C-terminus: UPF0229 protein Spro_2732 (422 aa).

The span at 77-90 (PGNDHFVQNDRVER) shows a compositional bias: basic and acidic residues. The segment at 77 to 109 (PGNDHFVQNDRVERPQGGGGGGSGQGNASQDGE) is disordered. Residues 92–101 (QGGGGGGSGQ) are compositionally biased toward gly residues.

The protein belongs to the UPF0229 family.

This is UPF0229 protein Spro_2732 from Serratia proteamaculans (strain 568).